The following is a 794-amino-acid chain: Solute carrier family 26 member 9 (794 aa).

Over 1-70 (MNKVRPRYII…WLPKYNIKGN (70 aa)) the chain is Cytoplasmic. The chain crosses the membrane as a helical span at residues 71 to 96 (LLNDALGGISAGTIQIPQGMAFALLA). At 97-100 (NLPP) the chain is on the extracellular side. Residues 101 to 109 (VNGLYSSFF) traverse the membrane as a helical segment. The Cytoplasmic segment spans residues 110-129 (PLVVYFFMGGIPQMVPGTFA). A helical transmembrane segment spans residues 130–142 (VISIIVGNVCLKL). The Extracellular portion of the chain corresponds to 143–160 (APESHFQNVTSNGTITNI). A helical membrane pass occupies residues 161–189 (EAMNTARMHISATLACLTAIIQIALSFVQ). The Cytoplasmic portion of the chain corresponds to 190–199 (FGFVAIYLSE). The helical transmembrane segment at 200-222 (SFIRGFMTAAGLQILISVLKYIF) threads the bilayer. Residues 223–235 (GVSIPPYSGVLAI) are Extracellular-facing. Residues 236 to 244 (IYTFIDICK) constitute an intramembrane region (helical). Residues 245–252 (ELPKTNVA) are Extracellular-facing. Residues 253-273 (SLIFALISTVLLIIVKELNMK) traverse the membrane as a helical segment. The Cytoplasmic segment spans residues 274-284 (FMHKIRFPIPM). Residues 285–297 (EIIIVIVATAVSG) form a helical membrane-spanning segment. Topologically, residues 298–332 (SFKLPERYHMNVVGHIPLGFPSPTVPNVTQWDEMV) are extracellular. A helical membrane pass occupies residues 333–356 (GTAFSLAIVGYVINLAMGRTLGAK). At 357-363 (HGFDVDA) the chain is on the cytoplasmic side. Residues 364–377 (NQEMLALGSGNFFG) traverse the membrane as a helical segment. The Extracellular portion of the chain corresponds to 378–388 (SFFFIHVICCA). Residues 389 to 398 (LSVTLAVDGA) traverse the membrane as a helical segment. Residues 399-403 (GGKSQ) are Cytoplasmic-facing. A helical transmembrane segment spans residues 404-417 (IASFFVMMSVMVTI). At 418 to 429 (LALGTYLNPLPK) the chain is on the extracellular side. The helical transmembrane segment at 430 to 455 (SVLGALIAVNLKNSLKQLSDPFYLWK) threads the bilayer. Over 456-459 (KSKL) the chain is Cytoplasmic. The chain crosses the membrane as a helical span at residues 460 to 474 (DCLVWLVSFFSTFIL). Over 475–477 (GLP) the chain is Extracellular. A helical transmembrane segment spans residues 478 to 496 (YGLAVGVAFSILVVIFNTQ). Residues 497 to 794 (FRNGSSLNQV…MFQTEIQTAL (298 aa)) lie on the Cytoplasmic side of the membrane. One can recognise an STAS domain in the interval 517-739 (VYSKVQPIDG…ITVHDAVLYA (223 aa)).

This sequence belongs to the SLC26A/SulP transporter (TC 2.A.53) family. As to quaternary structure, homodimer.

The protein localises to the cell membrane. Its subcellular location is the endomembrane system. It catalyses the reaction chloride(in) = chloride(out). The catalysed reaction is hydrogencarbonate(in) + chloride(out) = hydrogencarbonate(out) + chloride(in). Inhibited by ammonium and thiosulfate. Functionally, ion transporter that can act both as an ion channel and anion exchanger. Mainly acts as a chloride channel, which mediate uncoupled chloride anion transport in an alternate-access mechanism where a saturable binding site is alternately exposed to either one or the other side of the membrane. Also acts as a DIDS- and thiosulfate- sensitive anion exchanger the exchange of chloride for bicarbonate ions across the cell membrane. The chain is Solute carrier family 26 member 9 (slc26a9) from Xenopus tropicalis (Western clawed frog).